A 271-amino-acid chain; its full sequence is MSDMRLIVAGAGGRMGRALTRAISETKGVVLTGALEAPGSELLGQDAGVLAGLPANGVELSADLWTLSANADGILDFTVPGATIANVAIAAQRGIVHVIGTTGLSSSDNAVIQSVTRQAIVVKSGNMSLGVNLLAALTKRVAQSLGDNFDIEIVEMHHRAKIDAPSGTALLLGEAAALGRGVDLDSHSARGRDGLTGARKTGDIGFASLRGGTVTGDHSVIFAGPYERIELAHKAEDRMIFAHGALKAAQWAHGKKPGLYSMMDVLGLAEF.

NAD(+) contacts are provided by residues 10-15, E36, 100-102, and 124-127; these read GAGGRM, GTT, and SGNM. H157 functions as the Proton donor/acceptor in the catalytic mechanism. Residue H158 coordinates (S)-2,3,4,5-tetrahydrodipicolinate. The active-site Proton donor is the K161. 167–168 lines the (S)-2,3,4,5-tetrahydrodipicolinate pocket; sequence GT.

The protein belongs to the DapB family.

The protein resides in the cytoplasm. The catalysed reaction is (S)-2,3,4,5-tetrahydrodipicolinate + NAD(+) + H2O = (2S,4S)-4-hydroxy-2,3,4,5-tetrahydrodipicolinate + NADH + H(+). It carries out the reaction (S)-2,3,4,5-tetrahydrodipicolinate + NADP(+) + H2O = (2S,4S)-4-hydroxy-2,3,4,5-tetrahydrodipicolinate + NADPH + H(+). It participates in amino-acid biosynthesis; L-lysine biosynthesis via DAP pathway; (S)-tetrahydrodipicolinate from L-aspartate: step 4/4. Catalyzes the conversion of 4-hydroxy-tetrahydrodipicolinate (HTPA) to tetrahydrodipicolinate. This is 4-hydroxy-tetrahydrodipicolinate reductase from Rhodopseudomonas palustris (strain HaA2).